A 274-amino-acid polypeptide reads, in one-letter code: Undecaprenyl-diphosphatase 2 (274 aa).

Transmembrane regions (helical) follow at residues 47-64, 82-102, 110-130, 185-205, 219-239, and 249-269; these read VFVI…CWEY, WKFV…GLTF, LFSP…ILWA, ATEF…LYDL, LMAV…RGLI, and VFAW…WSGL.

Belongs to the UppP family.

Its subcellular location is the cell inner membrane. It catalyses the reaction di-trans,octa-cis-undecaprenyl diphosphate + H2O = di-trans,octa-cis-undecaprenyl phosphate + phosphate + H(+). In terms of biological role, catalyzes the dephosphorylation of undecaprenyl diphosphate (UPP). Confers resistance to bacitracin. The chain is Undecaprenyl-diphosphatase 2 from Rhodospirillum rubrum (strain ATCC 11170 / ATH 1.1.1 / DSM 467 / LMG 4362 / NCIMB 8255 / S1).